Here is a 313-residue protein sequence, read N- to C-terminus: MERIDSHVSPRYAQIPTFMRLPHDPQPRGYDVVVIGAPYDGGTSYRPGARFGPQAIRSESGLIHGVGIDRGPGTFDLINCVDAGDINLTPFDMNIAIDTAQSHLSGLLKANAAFLMIGGDHSLTVAALRAVAEQHGPLAVVHLDAHSDTNPAFYGGRYHHGTPFRHGIDEKLIDPAAMVQIGIRGHNPKPDSLDYARGHGVRVVTADEFGELGVGGTADLIREKVGQRPVYVSVDIDVVDPAFAPGTGTPAPGGLLSREVLALLRCVGDLKPVGFDVMEVSPLYDHGGITSILATEIGAELLYQYARAHRTQL.

Mn(2+)-binding residues include H121, D144, H146, D148, D235, and D237.

The protein belongs to the arginase family. As to quaternary structure, homohexamer. Mn(2+) serves as cofactor.

It catalyses the reaction amidinoproclavaminate + H2O = proclavaminate + urea. The protein operates within antibiotic biosynthesis; clavulanate biosynthesis; clavulanate from D-glyceraldehyde 3-phosphate and L-arginine: step 4/8. The protein is Proclavaminate amidinohydrolase (pah) of Streptomyces clavuligerus.